The chain runs to 159 residues: L-alanine exporter AlaE (159 aa).

Helical transmembrane passes span 17 to 37, 48 to 68, 86 to 106, and 110 to 130; these read FAMV…VSGM, LSIP…DYLL, MVAY…AVGA, and QIIT…IVYG.

Belongs to the AlaE exporter family.

It localises to the cell inner membrane. Functionally, exports L-alanine. The protein is L-alanine exporter AlaE of Photobacterium profundum (strain SS9).